The sequence spans 319 residues: Acetyl-coenzyme A carboxylase carboxyl transferase subunit alpha (319 aa).

The CoA carboxyltransferase C-terminal domain maps to 38 to 293 (HALQDKLRLR…KAVLLNELDA (256 aa)).

This sequence belongs to the AccA family. In terms of assembly, acetyl-CoA carboxylase is a heterohexamer composed of biotin carboxyl carrier protein (AccB), biotin carboxylase (AccC) and two subunits each of ACCase subunit alpha (AccA) and ACCase subunit beta (AccD).

The protein localises to the cytoplasm. The enzyme catalyses N(6)-carboxybiotinyl-L-lysyl-[protein] + acetyl-CoA = N(6)-biotinyl-L-lysyl-[protein] + malonyl-CoA. The protein operates within lipid metabolism; malonyl-CoA biosynthesis; malonyl-CoA from acetyl-CoA: step 1/1. In terms of biological role, component of the acetyl coenzyme A carboxylase (ACC) complex. First, biotin carboxylase catalyzes the carboxylation of biotin on its carrier protein (BCCP) and then the CO(2) group is transferred by the carboxyltransferase to acetyl-CoA to form malonyl-CoA. The sequence is that of Acetyl-coenzyme A carboxylase carboxyl transferase subunit alpha from Stenotrophomonas maltophilia (strain R551-3).